We begin with the raw amino-acid sequence, 418 residues long: Probable carboxypeptidase AO090166000075 (418 aa).

A signal peptide spans 1-18 (MKATDLFHVTALVAGALA). Asparagine 74 carries an N-linked (GlcNAc...) asparagine glycan. Zn(2+) is bound at residue aspartate 147. Asparagine 168 carries an N-linked (GlcNAc...) asparagine glycan. Glutamate 179 functions as the Proton acceptor in the catalytic mechanism. Glutamate 180 is a Zn(2+) binding site.

This sequence belongs to the peptidase M20A family. Zn(2+) is required as a cofactor.

The protein localises to the secreted. This chain is Probable carboxypeptidase AO090166000075, found in Aspergillus oryzae (strain ATCC 42149 / RIB 40) (Yellow koji mold).